A 500-amino-acid chain; its full sequence is Trehalose-6-phosphate synthase (500 aa).

Arginine 28 provides a ligand contact to D-glucose 6-phosphate. 48 to 49 contacts UDP-alpha-D-glucose; that stretch reads GG. The D-glucose 6-phosphate site is built by tyrosine 104 and aspartate 158. Positions 300 and 305 each coordinate UDP-alpha-D-glucose. Residue arginine 338 coordinates D-glucose 6-phosphate. 403–407 is a binding site for UDP-alpha-D-glucose; the sequence is LVAKE.

The protein belongs to the glycosyltransferase 20 family. Homotetramer.

The catalysed reaction is ADP-alpha-D-glucose + D-glucose 6-phosphate = alpha,alpha-trehalose 6-phosphate + ADP + H(+). It catalyses the reaction CDP-alpha-D-glucose + D-glucose 6-phosphate = alpha,alpha-trehalose 6-phosphate + CDP + H(+). The enzyme catalyses GDP-alpha-D-glucose + D-glucose 6-phosphate = alpha,alpha-trehalose 6-phosphate + GDP + H(+). It carries out the reaction TDP-alpha-D-glucose + D-glucose 6-phosphate = 5-methyl-UDP + alpha,alpha-trehalose 6-phosphate + H(+). The catalysed reaction is D-glucose 6-phosphate + UDP-alpha-D-glucose = alpha,alpha-trehalose 6-phosphate + UDP + H(+). It functions in the pathway glycan biosynthesis; trehalose biosynthesis. Its function is as follows. Probably involved in the osmoprotection via the biosynthesis of trehalose and in the production of glycogen and alpha-glucan via the TreS-Pep2 branch involved in the biosynthesis of maltose-1-phosphate (M1P). Catalyzes the transfer of glucose from UDP-glucose (UDP-Glc) to D-glucose 6-phosphate (Glc-6-P) to form trehalose-6-phosphate. Probably also able to use ADP-Glc, CDP-Glc, GDP-Glc and TDP-Glc as glucosyl donors. The polypeptide is Trehalose-6-phosphate synthase (Mycobacterium ulcerans (strain Agy99)).